The sequence spans 31 residues: MPIITSYFGFLLTALTIASALFIGLSKIRLI.

A helical transmembrane segment spans residues Ile3–Ile23.

The protein belongs to the PetL family. As to quaternary structure, the 4 large subunits of the cytochrome b6-f complex are cytochrome b6, subunit IV (17 kDa polypeptide, PetD), cytochrome f and the Rieske protein, while the 4 small subunits are PetG, PetL, PetM and PetN. The complex functions as a dimer.

The protein resides in the plastid. It is found in the chloroplast thylakoid membrane. Its function is as follows. Component of the cytochrome b6-f complex, which mediates electron transfer between photosystem II (PSII) and photosystem I (PSI), cyclic electron flow around PSI, and state transitions. PetL is important for photoautotrophic growth as well as for electron transfer efficiency and stability of the cytochrome b6-f complex. The chain is Cytochrome b6-f complex subunit 6 from Helianthus annuus (Common sunflower).